The chain runs to 152 residues: Transcriptional regulator MraZ (152 aa).

2 consecutive SpoVT-AbrB domains span residues 5 to 52 (ATLV…PLPE) and 81 to 124 (ASEC…DETT).

It belongs to the MraZ family. As to quaternary structure, forms oligomers.

It is found in the cytoplasm. The protein localises to the nucleoid. Functionally, negatively regulates its own expression and that of the subsequent genes in the proximal part of the division and cell wall (dcw) gene cluster. Acts by binding directly to DNA. May also regulate the expression of genes outside the dcw cluster. This is Transcriptional regulator MraZ from Shigella dysenteriae serotype 1 (strain Sd197).